Consider the following 345-residue polypeptide: UDP-N-acetylenolpyruvoylglucosamine reductase (345 aa).

Residues 16–185 enclose the FAD-binding PCMH-type domain; the sequence is VNAFAKSVVT…VSVGLRLCKK (170 aa). The active site involves R162. S231 serves as the catalytic Proton donor. Residue E328 is part of the active site.

Belongs to the MurB family. It depends on FAD as a cofactor.

It is found in the cytoplasm. The catalysed reaction is UDP-N-acetyl-alpha-D-muramate + NADP(+) = UDP-N-acetyl-3-O-(1-carboxyvinyl)-alpha-D-glucosamine + NADPH + H(+). It functions in the pathway cell wall biogenesis; peptidoglycan biosynthesis. In terms of biological role, cell wall formation. In Blochmanniella pennsylvanica (strain BPEN), this protein is UDP-N-acetylenolpyruvoylglucosamine reductase.